The primary structure comprises 614 residues: V-type proton ATPase catalytic subunit A isoform 1 (614 aa).

Residue 247–254 (GAFGCGKT) participates in ATP binding.

Belongs to the ATPase alpha/beta chains family. In terms of assembly, V-ATPase is a heteromultimeric enzyme made up of two complexes: the ATP-hydrolytic V1 complex and the proton translocation V0 complex. The V1 complex consists of three catalytic AB heterodimers that form a heterohexamer, three peripheral stalks each consisting of EG heterodimers, one central rotor including subunits D and F, and the regulatory subunits C and H. The proton translocation complex V0 consists of the proton transport subunit a, a ring of proteolipid subunits c9c'', rotary subunit d, subunits e and f, and the accessory subunits VhaAC45 and ATP6AP2.

It carries out the reaction ATP + H2O + 4 H(+)(in) = ADP + phosphate + 5 H(+)(out). ATP hydrolysis occurs at the interface between the nucleotide-binding domains of subunits A and B. ATP hydrolysis triggers a conformational change in the subunits D and F, which induces a shift of subunit d. The c-ring is subsequently rotated and results in a continuous proton translocation across the membrane. Its function is as follows. Catalytic subunit of the V1 complex of vacuolar(H+)-ATPase (V-ATPase), a multisubunit enzyme composed of a peripheral complex (V1) that hydrolyzes ATP and a membrane integral complex (V0) that translocates protons. V-ATPase is responsible for acidifying and maintaining the pH of intracellular compartments and in some cell types, is targeted to the plasma membrane, where it is responsible for acidifying the extracellular environment. The chain is V-type proton ATPase catalytic subunit A isoform 1 (Vha68-1) from Drosophila melanogaster (Fruit fly).